Here is a 452-residue protein sequence, read N- to C-terminus: Phosphoglucosamine mutase (452 aa).

Residue S108 is the Phosphoserine intermediate of the active site. 4 residues coordinate Mg(2+): S108, D247, D249, and D251. S108 is modified (phosphoserine).

The protein belongs to the phosphohexose mutase family. Mg(2+) serves as cofactor. Activated by phosphorylation.

It carries out the reaction alpha-D-glucosamine 1-phosphate = D-glucosamine 6-phosphate. Functionally, catalyzes the conversion of glucosamine-6-phosphate to glucosamine-1-phosphate. This is Phosphoglucosamine mutase from Burkholderia pseudomallei (strain K96243).